The sequence spans 234 residues: Orotidine 5'-phosphate decarboxylase (234 aa).

Residues D11, K33, 60–69 (DLKFHDIPNT), T120, R181, Q190, G210, and R211 each bind substrate. Residue K62 is the Proton donor of the active site.

Belongs to the OMP decarboxylase family. Type 1 subfamily. As to quaternary structure, homodimer.

It catalyses the reaction orotidine 5'-phosphate + H(+) = UMP + CO2. It participates in pyrimidine metabolism; UMP biosynthesis via de novo pathway; UMP from orotate: step 2/2. Catalyzes the decarboxylation of orotidine 5'-monophosphate (OMP) to uridine 5'-monophosphate (UMP). The sequence is that of Orotidine 5'-phosphate decarboxylase from Aliivibrio salmonicida (strain LFI1238) (Vibrio salmonicida (strain LFI1238)).